Consider the following 349-residue polypeptide: GTPase Obg (349 aa).

Residues 1-159 (MKFLDEAKVY…RWIWLRLKLI (159 aa)) form the Obg domain. Positions 160–327 (ADAGLVGLPN…ALRALVEVIG (168 aa)) constitute an OBG-type G domain. Residues 166–173 (GLPNAGKS), 191–195 (FTTLH), 212–215 (DIPG), 279–282 (NKID), and 308–310 (SGV) each bind GTP. Mg(2+)-binding residues include serine 173 and threonine 193.

This sequence belongs to the TRAFAC class OBG-HflX-like GTPase superfamily. OBG GTPase family. Monomer. Requires Mg(2+) as cofactor.

Its subcellular location is the cytoplasm. Functionally, an essential GTPase which binds GTP, GDP and possibly (p)ppGpp with moderate affinity, with high nucleotide exchange rates and a fairly low GTP hydrolysis rate. Plays a role in control of the cell cycle, stress response, ribosome biogenesis and in those bacteria that undergo differentiation, in morphogenesis control. The polypeptide is GTPase Obg (Rhodopseudomonas palustris (strain BisB18)).